A 492-amino-acid polypeptide reads, in one-letter code: N-succinylglutamate 5-semialdehyde dehydrogenase (492 aa).

220 to 225 (GSANTG) contributes to the NAD(+) binding site. Catalysis depends on residues glutamate 243 and cysteine 277.

It belongs to the aldehyde dehydrogenase family. AstD subfamily.

The enzyme catalyses N-succinyl-L-glutamate 5-semialdehyde + NAD(+) + H2O = N-succinyl-L-glutamate + NADH + 2 H(+). Its pathway is amino-acid degradation; L-arginine degradation via AST pathway; L-glutamate and succinate from L-arginine: step 4/5. Functionally, catalyzes the NAD-dependent reduction of succinylglutamate semialdehyde into succinylglutamate. This Escherichia coli (strain 55989 / EAEC) protein is N-succinylglutamate 5-semialdehyde dehydrogenase.